The sequence spans 240 residues: GATA transcription factor 4 (240 aa).

The disordered stretch occupies residues 104 to 124 (ISFTGKPRSRRSRAPAPSVAG). The short motif at 109 to 116 (KPRSRRSR) is the Nuclear localization signal element. A GATA-type zinc finger spans residues 154–208 (ADGARRCTHCASEKTPQWRTGPLGPKTLCNACGVRYKSGRLVPEYRPASSPTFVL).

The protein belongs to the type IV zinc-finger family. Class A subfamily. As to expression, expressed in roots, flowers and leaves, and to a lower extent in stems.

The protein localises to the nucleus. Functionally, transcriptional activator that specifically binds 5'-GATA-3' or 5'-GAT-3' motifs within gene promoters. May be involved in the regulation of some light-responsive genes. The sequence is that of GATA transcription factor 4 (GATA4) from Arabidopsis thaliana (Mouse-ear cress).